Here is a 410-residue protein sequence, read N- to C-terminus: Putative transposase Rv3428c (410 aa).

The Integrase catalytic domain occupies 40–220 (VPRGPVDAGS…QPLRMFEAVE (181 aa)). Positions 390–410 (AANEPTTSSPASTAGGVPARP) are disordered.

The protein belongs to the transposase IS21/IS408/IS1162 family.

The chain is Putative transposase Rv3428c from Mycobacterium tuberculosis (strain ATCC 25618 / H37Rv).